The following is a 212-amino-acid chain: Endonuclease III (212 aa).

Positions 108-127 (FKELVKLPGVGRKTANVVLN) constitute a HhH domain. [4Fe-4S] cluster is bound by residues Cys-187, Cys-194, Cys-197, and Cys-203.

It belongs to the Nth/MutY family. Requires [4Fe-4S] cluster as cofactor.

It catalyses the reaction 2'-deoxyribonucleotide-(2'-deoxyribose 5'-phosphate)-2'-deoxyribonucleotide-DNA = a 3'-end 2'-deoxyribonucleotide-(2,3-dehydro-2,3-deoxyribose 5'-phosphate)-DNA + a 5'-end 5'-phospho-2'-deoxyribonucleoside-DNA + H(+). Its function is as follows. DNA repair enzyme that has both DNA N-glycosylase activity and AP-lyase activity. The DNA N-glycosylase activity releases various damaged pyrimidines from DNA by cleaving the N-glycosidic bond, leaving an AP (apurinic/apyrimidinic) site. The AP-lyase activity cleaves the phosphodiester bond 3' to the AP site by a beta-elimination, leaving a 3'-terminal unsaturated sugar and a product with a terminal 5'-phosphate. This chain is Endonuclease III, found in Rickettsia prowazekii (strain Madrid E).